The sequence spans 95 residues: Aspartyl/glutamyl-tRNA(Asn/Gln) amidotransferase subunit C (95 aa).

This sequence belongs to the GatC family. As to quaternary structure, heterotrimer of A, B and C subunits.

The catalysed reaction is L-glutamyl-tRNA(Gln) + L-glutamine + ATP + H2O = L-glutaminyl-tRNA(Gln) + L-glutamate + ADP + phosphate + H(+). It catalyses the reaction L-aspartyl-tRNA(Asn) + L-glutamine + ATP + H2O = L-asparaginyl-tRNA(Asn) + L-glutamate + ADP + phosphate + 2 H(+). Allows the formation of correctly charged Asn-tRNA(Asn) or Gln-tRNA(Gln) through the transamidation of misacylated Asp-tRNA(Asn) or Glu-tRNA(Gln) in organisms which lack either or both of asparaginyl-tRNA or glutaminyl-tRNA synthetases. The reaction takes place in the presence of glutamine and ATP through an activated phospho-Asp-tRNA(Asn) or phospho-Glu-tRNA(Gln). This Prosthecochloris aestuarii (strain DSM 271 / SK 413) protein is Aspartyl/glutamyl-tRNA(Asn/Gln) amidotransferase subunit C.